The primary structure comprises 374 residues: MPLLISPFAELDLIRQPEQQDEPLQAFDAADEYLLNHVAETGLSLQSRVLVLNDSFGALAASLASHATVVSSTDSFLAAQGLEKNLARNGMSYDAVPHIPASEPLSGPFDWVLIRVPKTLALLEEQLIRLQGQLAPGARVVAAAMVKHLPRSAGDLLEEYVGPVQASLAVKKARLLFATPQPMEVRTSPYPTRYRLDEPAIELLNHANVFCRDGLDIGTRAFLPYLPKNLGTARVADLGCGNGVLAIASALDNPQAHYTLVDESFMAVQSAAENWRATLGERVVEVRAADGLDTQEPDSLDVVLCNPPFHQQQVVGDFLAWRMFLQARAALVNGGALYIVGNRHLGYHTKLSRLFRGVEQVAATPKFVILKARK.

It belongs to the methyltransferase superfamily. RlmG family.

The protein resides in the cytoplasm. The catalysed reaction is guanosine(1835) in 23S rRNA + S-adenosyl-L-methionine = N(2)-methylguanosine(1835) in 23S rRNA + S-adenosyl-L-homocysteine + H(+). Its function is as follows. Specifically methylates the guanine in position 1835 (m2G1835) of 23S rRNA. This chain is Ribosomal RNA large subunit methyltransferase G, found in Pseudomonas savastanoi pv. phaseolicola (strain 1448A / Race 6) (Pseudomonas syringae pv. phaseolicola (strain 1448A / Race 6)).